Here is a 663-residue protein sequence, read N- to C-terminus: Alpha-1,4-glucan:maltose-1-phosphate maltosyltransferase (663 aa).

A disordered region spans residues 238–266 (IGETNRKGPDDAPEAGPDDPGSPWAIGGF). The alpha-maltose 1-phosphate site is built by K244, Q309, and D344. Residue D380 is the Nucleophile of the active site. Position 381 (N381) interacts with alpha-maltose 1-phosphate. The active-site Proton donor is E409. 521–522 (KY) contributes to the alpha-maltose 1-phosphate binding site.

The protein belongs to the glycosyl hydrolase 13 family. GlgE subfamily. In terms of assembly, homodimer.

The enzyme catalyses alpha-maltose 1-phosphate + [(1-&gt;4)-alpha-D-glucosyl](n) = [(1-&gt;4)-alpha-D-glucosyl](n+2) + phosphate. Maltosyltransferase that uses maltose 1-phosphate (M1P) as the sugar donor to elongate linear or branched alpha-(1-&gt;4)-glucans. Is involved in a branched alpha-glucan biosynthetic pathway from trehalose, together with TreS, Mak and GlgB. The sequence is that of Alpha-1,4-glucan:maltose-1-phosphate maltosyltransferase from Salinibacter ruber (strain DSM 13855 / M31).